The sequence spans 253 residues: Cyclin-C1-2 (253 aa).

This sequence belongs to the cyclin family. Cyclin C subfamily.

The protein is Cyclin-C1-2 (CYCC1-2) of Arabidopsis thaliana (Mouse-ear cress).